Reading from the N-terminus, the 492-residue chain is Linolenate hydroperoxide lyase, chloroplastic (492 aa).

The disordered stretch occupies residues 1 to 33 (MLLRTMAATSPRPPPSTSLTSQQPPSPPSQLPL). A chloroplast-targeting transit peptide spans 1 to 34 (MLLRTMAATSPRPPPSTSLTSQQPPSPPSQLPLR). C454 is a binding site for heme.

The protein belongs to the cytochrome P450 family. The cofactor is heme. Expressed in roots, leaves, flowers and siliques.

It localises to the plastid. It is found in the chloroplast. Its function is as follows. Catalyzes the conversion of (9Z,11E,15Z)-(13S)-hydroperoxyoctadeca-9,11,15-trienoate to (9Z)-12-oxo-dodec-9-enoate and cis-3-hexenal. Possesses low activity toward (9Z,11E)-(13S)-13-hydroperoxyoctadeca-9,11-dienoate. Required for the synthesis of the green leaf volatiles (GLVs) hexanal and trans-2-hexenal. The protein is Linolenate hydroperoxide lyase, chloroplastic of Arabidopsis thaliana (Mouse-ear cress).